The sequence spans 525 residues: MSRQFTCKSGAAAKGGFSGCSAVLSGGSTSSYRAGGKGLSGGFGSRSLYNLGGVRSISFNVASGSGKSGGYGFGRGRASGFAGSMFGSVALGPMCPTVCPPGGIHQVTVNESLLAPLNVELDPEIQKVRAQEREQIKALNNKFASFIDKVRFLEQQNQVLETKWELLQQLDLNNCKNNLEPILEGYISNLRKQLETLSGDRVRLDSELRSVRDVVEDYKKRYEEEINRRTAAENEFVLLKKDVDAAYANKVELQAKVDSMDQEIKFFKCLYEAEIAQIQSHISDMSVILSMDNNRDLNLDSIIDEVRAQYEDIALKSKAEAEALYQTKFQELQLAAGRHGDDLKNTKNEISELTRLIQRIRSEIENVKKQASNLETAIADAEQRGDNALKDARAKLDELEAALHQSKEELARMMREYQELMSLKLALDMEIATYRKLLESEECRMSGEFPSPVSISIISSTSGSGGYGFRPSSVSGGYVANSGSCISGVCSVRGGESRSRSSTTDYKDALGKGSSLSAPSKKASR.

Residues 1–131 (MSRQFTCKSG…DPEIQKVRAQ (131 aa)) are head. A coil 1A region spans residues 132–167 (EREQIKALNNKFASFIDKVRFLEQQNQVLETKWELL). The 314-residue stretch at 132 to 445 (EREQIKALNN…KLLESEECRM (314 aa)) folds into the IF rod domain. Residues 168–186 (QQLDLNNCKNNLEPILEGY) form a linker 1 region. Residues 187-278 (ISNLRKQLET…CLYEAEIAQI (92 aa)) are coil 1B. Positions 279-302 (QSHISDMSVILSMDNNRDLNLDSI) are linker 12. A coil 2 region spans residues 303 to 441 (IDEVRAQYED…ATYRKLLESE (139 aa)). Positions 442–525 (ECRMSGEFPS…LSAPSKKASR (84 aa)) are tail. The interval 492–525 (VRGGESRSRSSTTDYKDALGKGSSLSAPSKKASR) is disordered. Residues 495-510 (GESRSRSSTTDYKDAL) show a composition bias toward basic and acidic residues.

It belongs to the intermediate filament family. In terms of assembly, heterodimer of a type I and a type II keratin. Associates with KRT16 and/or KRT17.

The protein resides in the cytoplasm. The protein localises to the cytoskeleton. In terms of biological role, plays a central role in hair formation. Essential component of keratin intermediate filaments in the inner root sheath (IRS) of the hair follicle. The polypeptide is Keratin, type II cytoskeletal 71 (KRT71) (Bos taurus (Bovine)).